An 80-amino-acid polypeptide reads, in one-letter code: Regulatory protein HrpD6 (80 aa).

Functionally, involved in the regulation of several genes of the hrp-hrc-hpa cluster, which encodes a type III secretion system (T3SS). Upregulates the expression of hpa2, hpa1 and hpaB and partially controls the expression of hrcC and hrcT. Controls the secretion of the T3SS TAL effector AvrXa27. Also regulates the expression of several HrpX-regulated protein (Xrp) genes. Has no influence on hrpG or hrpX expression. This Xanthomonas oryzae pv. oryzicola protein is Regulatory protein HrpD6.